Here is a 303-residue protein sequence, read N- to C-terminus: UDP-N-acetylenolpyruvoylglucosamine reductase (303 aa).

An FAD-binding PCMH-type domain is found at 28–195; that stretch reads KTGGPAQYLA…ISATFGLEPG (168 aa). Arginine 174 is a catalytic residue. Serine 224 (proton donor) is an active-site residue. Residue glutamate 294 is part of the active site.

This sequence belongs to the MurB family. It depends on FAD as a cofactor.

Its subcellular location is the cytoplasm. The enzyme catalyses UDP-N-acetyl-alpha-D-muramate + NADP(+) = UDP-N-acetyl-3-O-(1-carboxyvinyl)-alpha-D-glucosamine + NADPH + H(+). Its pathway is cell wall biogenesis; peptidoglycan biosynthesis. In terms of biological role, cell wall formation. This Lactobacillus gasseri (strain ATCC 33323 / DSM 20243 / BCRC 14619 / CIP 102991 / JCM 1131 / KCTC 3163 / NCIMB 11718 / NCTC 13722 / AM63) protein is UDP-N-acetylenolpyruvoylglucosamine reductase.